The primary structure comprises 416 residues: Tyrosine permease (416 aa).

Transmembrane regions (helical) follow at residues 13 to 33 (GTML…PIAM), 34 to 54 (AGIW…MMLL), 86 to 106 (VVVG…YISG), 127 to 147 (LSVI…SLLV), 153 to 173 (VLII…IWHV), 192 to 212 (LPYI…HGNV), 231 to 251 (IFIG…VTMG), 260 to 280 (PIIA…GLFT), 286 to 306 (LILT…ATLG), 337 to 357 (VVCF…GLAF), and 389 to 409 (ILNL…LDVF).

It belongs to the amino acid/polyamine transporter 2 family. Mtr/TnaB/TyrP permease subfamily.

It localises to the cell inner membrane. The sequence is that of Tyrosine permease (tutB) from Enterobacter agglomerans (Erwinia herbicola).